Here is a 267-residue protein sequence, read N- to C-terminus: 2-keto-3-deoxy-L-rhamnonate aldolase (267 aa).

The Proton acceptor role is filled by His49. Gln151 lines the substrate pocket. Glu153 lines the Mg(2+) pocket. Ala178 and Asp179 together coordinate substrate. Mg(2+) is bound at residue Asp179.

The protein belongs to the HpcH/HpaI aldolase family. KDR aldolase subfamily. As to quaternary structure, homohexamer. The cofactor is Mg(2+).

The enzyme catalyses 2-dehydro-3-deoxy-L-rhamnonate = (S)-lactaldehyde + pyruvate. Catalyzes the reversible retro-aldol cleavage of 2-keto-3-deoxy-L-rhamnonate (KDR) to pyruvate and lactaldehyde. In Salmonella enteritidis PT4 (strain P125109), this protein is 2-keto-3-deoxy-L-rhamnonate aldolase.